Here is a 364-residue protein sequence, read N- to C-terminus: D-alanine--D-alanine ligase (364 aa).

Residues 134–344 (KVLLKSFNIP…YESLVDKLIT (211 aa)) form the ATP-grasp domain. 167-222 (NNKLNYPVIVKPSVLGSSIGINVAYNVSQIEKYIEEAFEYDLTVVVEKFIKAREIE) is a binding site for ATP. 3 residues coordinate Mg(2+): D297, E311, and N313.

Belongs to the D-alanine--D-alanine ligase family. Mg(2+) is required as a cofactor. Mn(2+) serves as cofactor.

It localises to the cytoplasm. It carries out the reaction 2 D-alanine + ATP = D-alanyl-D-alanine + ADP + phosphate + H(+). It participates in cell wall biogenesis; peptidoglycan biosynthesis. In terms of biological role, cell wall formation. This is D-alanine--D-alanine ligase from Borrelia duttonii (strain Ly).